The chain runs to 289 residues: MFDNSTQVVGLMGYPLGHSMSPAMHNRAYKDLGINYVYLPLEIKPDFLKEGIEGLRAFNFRGVNVTIPYKEKVIPYLDEIDRLAGEIGAVNTIVNNGGKLKGYNTDALGFKKMLEDDCSFEIKGTKAVIIGAGGASRAVGAVLAREGASEIFLLNRTLKKAAKLVGIWNKTYPGIKTVALPLDEDKYLPVVKRCDVIIDTTPVGMAPGIKGGPVIAKEAITRDTLVVDLVYNPPETTLIKAGRQVGARTMNGFPMLIYQAAYAFKLWTGIKPELFIKPVREAISPDFFA.

Residues 19-21 (SMS) and Thr66 each bind shikimate. The active-site Proton acceptor is the Lys70. Asn91 and Asp106 together coordinate shikimate. NADP(+) is bound by residues 131-135 (GAGGA), 155-160 (NRTLKK), and Leu229. Tyr231 provides a ligand contact to shikimate. Gly252 serves as a coordination point for NADP(+).

It belongs to the shikimate dehydrogenase family. In terms of assembly, homodimer.

The catalysed reaction is shikimate + NADP(+) = 3-dehydroshikimate + NADPH + H(+). Its pathway is metabolic intermediate biosynthesis; chorismate biosynthesis; chorismate from D-erythrose 4-phosphate and phosphoenolpyruvate: step 4/7. In terms of biological role, involved in the biosynthesis of the chorismate, which leads to the biosynthesis of aromatic amino acids. Catalyzes the reversible NADPH linked reduction of 3-dehydroshikimate (DHSA) to yield shikimate (SA). The polypeptide is Shikimate dehydrogenase (NADP(+)) (Halothermothrix orenii (strain H 168 / OCM 544 / DSM 9562)).